Reading from the N-terminus, the 226-residue chain is ATP-dependent dethiobiotin synthetase BioD (226 aa).

13–18 (DVGKTL) lines the ATP pocket. A Mg(2+)-binding site is contributed by threonine 17. Lysine 38 is an active-site residue. Residues aspartate 55, 117–120 (EGAG), 177–178 (NR), 206–208 (PFV), and glutamate 213 contribute to the ATP site. Residues aspartate 55 and glutamate 117 each contribute to the Mg(2+) site.

It belongs to the dethiobiotin synthetase family. In terms of assembly, homodimer. Mg(2+) is required as a cofactor.

It is found in the cytoplasm. The enzyme catalyses (7R,8S)-7,8-diammoniononanoate + CO2 + ATP = (4R,5S)-dethiobiotin + ADP + phosphate + 3 H(+). Its pathway is cofactor biosynthesis; biotin biosynthesis; biotin from 7,8-diaminononanoate: step 1/2. Its function is as follows. Catalyzes a mechanistically unusual reaction, the ATP-dependent insertion of CO2 between the N7 and N8 nitrogen atoms of 7,8-diaminopelargonic acid (DAPA, also called 7,8-diammoniononanoate) to form a ureido ring. This is ATP-dependent dethiobiotin synthetase BioD from Aeromonas hydrophila subsp. hydrophila (strain ATCC 7966 / DSM 30187 / BCRC 13018 / CCUG 14551 / JCM 1027 / KCTC 2358 / NCIMB 9240 / NCTC 8049).